Here is a 183-residue protein sequence, read N- to C-terminus: Translation initiation factor IF-3 (183 aa).

Belongs to the IF-3 family. As to quaternary structure, monomer.

It localises to the cytoplasm. In terms of biological role, IF-3 binds to the 30S ribosomal subunit and shifts the equilibrium between 70S ribosomes and their 50S and 30S subunits in favor of the free subunits, thus enhancing the availability of 30S subunits on which protein synthesis initiation begins. The protein is Translation initiation factor IF-3 of Yersinia pseudotuberculosis serotype O:1b (strain IP 31758).